Consider the following 481-residue polypeptide: Aromatic amino acid aminotransferase C1773.13 (481 aa).

Belongs to the class-I pyridoxal-phosphate-dependent aminotransferase family. Requires pyridoxal 5'-phosphate as cofactor.

Its subcellular location is the cytoplasm. The enzyme catalyses an aromatic L-alpha-amino acid + 2-oxoglutarate = an aromatic oxo-acid + L-glutamate. Functionally, has aromatic amino acid transaminase activity. This Schizosaccharomyces pombe (strain 972 / ATCC 24843) (Fission yeast) protein is Aromatic amino acid aminotransferase C1773.13.